The following is a 136-amino-acid chain: MFLFTFTILESEKLIIWPVPAVVLGVMAPKRAYSTPFGPWPGPAECLWNCPSELRQFSSCCLPLPKLRPPRPTFASLWRVVAAIAALFQVPWRRKTGVGKAIFCIGCCCLAYQWRRTRYFAYKIMTGTCFMTDLAP.

This is an uncharacterized protein from Saccharomyces cerevisiae (strain ATCC 204508 / S288c) (Baker's yeast).